A 573-amino-acid polypeptide reads, in one-letter code: Proline--tRNA ligase (573 aa).

Belongs to the class-II aminoacyl-tRNA synthetase family. ProS type 1 subfamily. In terms of assembly, homodimer.

The protein resides in the cytoplasm. The catalysed reaction is tRNA(Pro) + L-proline + ATP = L-prolyl-tRNA(Pro) + AMP + diphosphate. In terms of biological role, catalyzes the attachment of proline to tRNA(Pro) in a two-step reaction: proline is first activated by ATP to form Pro-AMP and then transferred to the acceptor end of tRNA(Pro). As ProRS can inadvertently accommodate and process non-cognate amino acids such as alanine and cysteine, to avoid such errors it has two additional distinct editing activities against alanine. One activity is designated as 'pretransfer' editing and involves the tRNA(Pro)-independent hydrolysis of activated Ala-AMP. The other activity is designated 'posttransfer' editing and involves deacylation of mischarged Ala-tRNA(Pro). The misacylated Cys-tRNA(Pro) is not edited by ProRS. The polypeptide is Proline--tRNA ligase (Elusimicrobium minutum (strain Pei191)).